We begin with the raw amino-acid sequence, 317 residues long: Ferrochelatase (317 aa).

Fe cation contacts are provided by His191 and Glu271.

It belongs to the ferrochelatase family.

The protein resides in the cytoplasm. It carries out the reaction heme b + 2 H(+) = protoporphyrin IX + Fe(2+). It participates in porphyrin-containing compound metabolism; protoheme biosynthesis; protoheme from protoporphyrin-IX: step 1/1. Functionally, catalyzes the ferrous insertion into protoporphyrin IX. The chain is Ferrochelatase from Thermus thermophilus (strain ATCC BAA-163 / DSM 7039 / HB27).